The sequence spans 325 residues: Small ribosomal subunit protein RACK1 (325 aa).

7 WD repeats span residues 13 to 44 (AHTDVVTAIATPIDNSDMIVTASRDKSIILWH), 61 to 91 (GHSHFVQDVVLSSDGQFALSGSWDGELRLWD), 103 to 133 (GHTKDVLSVAFSIDNRQIVSASRDRTIKLWN), 147 to 179 (AHSDWVSCVRFSPSTPQPTIVSASWDRTVKVWN), 191 to 221 (GHSGYVNTVAVSPDGSLCASGGKDGVILLWD), 232 to 261 (DAGSIIHALCFSPNRYWLCAATESSIKIWD), and 291 to 321 (KKVIYCTSLNWSADGSTLFSGYTDGVVRVWG).

It belongs to the WD repeat G protein beta family. Ribosomal protein RACK1 subfamily.

In terms of biological role, plays a role in hormone-mediated cell division. The polypeptide is Small ribosomal subunit protein RACK1 (GB1) (Medicago sativa (Alfalfa)).